A 351-amino-acid chain; its full sequence is uncharacterized protein (351 aa).

5 residues coordinate Mn(2+): Asp-215, Asp-226, His-290, Glu-319, and Glu-333.

The protein belongs to the peptidase M24B family. Requires Mn(2+) as cofactor.

This is an uncharacterized protein from Staphylococcus aureus (strain MSSA476).